Consider the following 257-residue polypeptide: 3-deoxy-manno-octulosonate cytidylyltransferase (257 aa).

This sequence belongs to the KdsB family.

The protein localises to the cytoplasm. The enzyme catalyses 3-deoxy-alpha-D-manno-oct-2-ulosonate + CTP = CMP-3-deoxy-beta-D-manno-octulosonate + diphosphate. It participates in nucleotide-sugar biosynthesis; CMP-3-deoxy-D-manno-octulosonate biosynthesis; CMP-3-deoxy-D-manno-octulosonate from 3-deoxy-D-manno-octulosonate and CTP: step 1/1. It functions in the pathway bacterial outer membrane biogenesis; lipopolysaccharide biosynthesis. Functionally, activates KDO (a required 8-carbon sugar) for incorporation into bacterial lipopolysaccharide in Gram-negative bacteria. The sequence is that of 3-deoxy-manno-octulosonate cytidylyltransferase from Methylobacillus flagellatus (strain ATCC 51484 / DSM 6875 / VKM B-1610 / KT).